Reading from the N-terminus, the 689-residue chain is Glycine--tRNA ligase beta subunit (689 aa).

Belongs to the class-II aminoacyl-tRNA synthetase family. As to quaternary structure, tetramer of two alpha and two beta subunits.

Its subcellular location is the cytoplasm. It catalyses the reaction tRNA(Gly) + glycine + ATP = glycyl-tRNA(Gly) + AMP + diphosphate. This chain is Glycine--tRNA ligase beta subunit, found in Shewanella woodyi (strain ATCC 51908 / MS32).